Reading from the N-terminus, the 94-residue chain is Protein RnfH (94 aa).

Belongs to the UPF0125 (RnfH) family.

This chain is Protein RnfH, found in Serratia proteamaculans (strain 568).